Here is a 177-residue protein sequence, read N- to C-terminus: Protein CutA 1, chloroplastic (177 aa).

The N-terminal 60 residues, 1-60, are a transit peptide targeting the chloroplast; the sequence is MPLLPSPLGSLSAAATAAPRRAAAAAGLSPLLLRRRAPIAGALLFLSLGAFAGVRSLSSS.

It belongs to the CutA family. Homotrimer.

It localises to the plastid. The protein localises to the chloroplast. This is Protein CutA 1, chloroplastic (CUTA1) from Oryza sativa subsp. japonica (Rice).